The sequence spans 547 residues: MRVNLLIAMIIFALIWPATALRAAVSKTTWADAPAREFVFVENNSDDNFFVTPGGALDPRLTGANRWTGLKYNGSGTIYQQSLGYIDNGYNTGLYTNWKFDMWLENSPVSSPLTGLRCINWYAGCNMTTSLILPQTTDASGFYGATVTSGGAKWMHGMLSDAFYQYLQQMPVGSSFTMTINACQTSVNYDANSGARCKDQASGNWYVRNVTHTKAANLRLINTHSLAEVFINSDGVPTLGEGNADCRTQTIGSRSGLSCKMVNYTLQTNGLSNTSIHIFPAIANSSLASAVGAYDMQFSLNGSSWKPVSNTAYYYTFNEMKSADSIYVFFSSNFFKQMVNLGISDINTKDLFNFRFQNTTSPESGWYEFSTSNTLIIKPRDFSISIISDEYTQTPSREGYVGSGESALDFGYIVTTSGKTAADEVLIKVTGPAQVIGGRSYCVFSSDDGKAKVPFPATLSFITRNGATKTYDAGCDDSWRDMTDALWLTTPWTDISGEVGQMDKTTVKFSIPMDNAISLRTVDDNGWFGEVSASGEIHVQATWRNIN.

A signal peptide spans 1–20; that stretch reads MRVNLLIAMIIFALIWPATA.

Belongs to the EcpD/MatE family. As to quaternary structure, forms polymers. Interacts with EcpA.

The protein resides in the fimbrium. Functionally, part of the ecpRABCDE operon, which encodes the E.coli common pilus (ECP). ECP is found in both commensal and pathogenic strains and plays a dual role in early-stage biofilm development and host cell recognition. Tip pilus adhesin, which is required for assembly of EcpA into fibers. This chain is Fimbria adhesin EcpD (ecpD), found in Escherichia coli O18:K1:H7 (strain IHE3034 / ExPEC).